The primary structure comprises 394 residues: Elongation factor Tu 2 (394 aa).

Residues 10-204 (KPHVNVGTIG…ALDSYIPQPE (195 aa)) enclose the tr-type G domain. The tract at residues 19 to 26 (GHVDHGKT) is G1. Residue 19-26 (GHVDHGKT) participates in GTP binding. A Mg(2+)-binding site is contributed by threonine 26. The tract at residues 60-64 (GITIN) is G2. Residues 81–84 (DCPG) are G3. Residues 81–85 (DCPGH) and 136–139 (NKCD) contribute to the GTP site. A G4 region spans residues 136 to 139 (NKCD). The segment at 174-176 (SAL) is G5.

Belongs to the TRAFAC class translation factor GTPase superfamily. Classic translation factor GTPase family. EF-Tu/EF-1A subfamily. In terms of assembly, monomer.

It localises to the cytoplasm. It carries out the reaction GTP + H2O = GDP + phosphate + H(+). Its function is as follows. GTP hydrolase that promotes the GTP-dependent binding of aminoacyl-tRNA to the A-site of ribosomes during protein biosynthesis. This Yersinia pestis bv. Antiqua (strain Antiqua) protein is Elongation factor Tu 2.